Here is a 190-residue protein sequence, read N- to C-terminus: Ohanin (190 aa).

Positions 1–20 (MLLFTLCFFADQENGGKALA) are cleaved as a signal peptide. Positions 21 to 127 (SPPGNWQKAD…RIWQKGLWWL (107 aa)) constitute a B30.2/SPRY domain. Residues 128-190 (RRLETDSDKL…IGARVSLANL (63 aa)) constitute a propeptide that is removed on maturation.

As to expression, expressed by the venom gland.

Its subcellular location is the secreted. Its function is as follows. Neurotoxin that produces dose-dependent hypolocomotion and hyperalgesia in mice. May directly act on the central nervous system, as it is 6500-fold more potent when administered intracerebroventricularly than intraperitoneal. In Ophiophagus hannah (King cobra), this protein is Ohanin.